The following is a 1001-amino-acid chain: Ribonuclease E/G-like protein, chloroplastic (1001 aa).

A chloroplast-targeting transit peptide spans 1-48; sequence MDVTEVPWRRLPQFSVSSRASWLVSSGFPLSSYMFSHVERGKTFRLTL. Residues 76-185 enclose the CBM20 domain; sequence SRLKGLCEVV…KIIIRDSWMS (110 aa). Mg(2+) is bound at residue Asp755. A coiled-coil region spans residues 769–789; that stretch reads QEKAILEVNLAAARQIAREIR. Asp800 is a binding site for Mg(2+). Residues Cys858 and Cys861 each contribute to the Zn(2+) site.

It belongs to the RNase E/G family. Part of a chloroplastic degradosome-like complex. Interacts with RHON1. A homotetramer formed by a dimer of dimers. The cofactor is Mg(2+). It depends on Zn(2+) as a cofactor. Expressed in cotyledons, rosette and cauline leaves.

It localises to the plastid. The protein resides in the chloroplast stroma. Involved in intercistronic processing of primary transcripts from chloroplast operons. The endonucleolytic activity of the enzyme depends on the number of phosphates at the 5' end, is inhibited by structured RNA, and preferentially cleaves A/U-rich sequences. In Arabidopsis thaliana (Mouse-ear cress), this protein is Ribonuclease E/G-like protein, chloroplastic (RNE).